The following is a 404-amino-acid chain: Argininosuccinate synthase (404 aa).

Residues 10 to 18 and Ala-37 contribute to the ATP site; that span reads AYSGGLDTS. Tyr-90 and Ser-95 together coordinate L-citrulline. Residue Gly-120 coordinates ATP. 3 residues coordinate L-aspartate: Thr-122, Asn-126, and Asp-127. An L-citrulline-binding site is contributed by Asn-126. The L-citrulline site is built by Arg-130, Ser-181, Ser-190, Glu-266, and Tyr-278. The tract at residues 173–200 is disordered; sequence DKRGESPFSTDANLLHTSSEGKVLEDPW. Residues 179-192 are compositionally biased toward polar residues; the sequence is PFSTDANLLHTSSE.

This sequence belongs to the argininosuccinate synthase family. Type 1 subfamily. As to quaternary structure, homotetramer.

It localises to the cytoplasm. The enzyme catalyses L-citrulline + L-aspartate + ATP = 2-(N(omega)-L-arginino)succinate + AMP + diphosphate + H(+). It functions in the pathway amino-acid biosynthesis; L-arginine biosynthesis; L-arginine from L-ornithine and carbamoyl phosphate: step 2/3. The chain is Argininosuccinate synthase from Novosphingobium aromaticivorans (strain ATCC 700278 / DSM 12444 / CCUG 56034 / CIP 105152 / NBRC 16084 / F199).